Consider the following 172-residue polypeptide: NADH-ubiquinone oxidoreductase chain 6 (172 aa).

Helical transmembrane passes span 1–21 (MTYFVLFLGLCFVLGGLAVAS), 27–47 (YGVVGLVLASVAGCAWLLSLG), 48–68 (VSFVSLVLFMVYLGGMLVVFV), 87–107 (VVGYGMGFVAVLVMGMVVGGF), and 138–158 (CGVGMFLVAGWGLLLTLFVVL).

Belongs to the complex I subunit 6 family.

Its subcellular location is the mitochondrion membrane. The catalysed reaction is a ubiquinone + NADH + 5 H(+)(in) = a ubiquinol + NAD(+) + 4 H(+)(out). Its function is as follows. Core subunit of the mitochondrial membrane respiratory chain NADH dehydrogenase (Complex I) that is believed to belong to the minimal assembly required for catalysis. Complex I functions in the transfer of electrons from NADH to the respiratory chain. The immediate electron acceptor for the enzyme is believed to be ubiquinone. This Uria lomvia (Thick-billed murre) protein is NADH-ubiquinone oxidoreductase chain 6 (MT-ND6).